Consider the following 862-residue polypeptide: Chaperone protein ClpB 1 (862 aa).

The Clp R domain occupies 5–147; that stretch reads AEQFTEQAWA…KEAITAVRGN (143 aa). 2 repeat regions span residues 8–72 and 84–147; these read FTEQ…LQRL and LGRS…VRGN. Positions 160–341 are NBD1; sequence ESLAKYGRDL…RRFQQVLVDQ (182 aa). Position 207-214 (207-214) interacts with ATP; the sequence is GEPGVGKT. Positions 342 to 550 are linker; sequence PTVPDTISIL…IAEVIAKWTG (209 aa). A coiled-coil region spans residues 392–526; it reads IDLVDESAAR…QEDLLEDEDG (135 aa). The tract at residues 560–771 is NBD2; that stretch reads EMEKLLQLED…RLDDQIIFRS (212 aa). 610–617 provides a ligand contact to ATP; the sequence is GPTGVGKT. Residues 772–862 form a C-terminal region; that stretch reads LEKEELRRIV…DAGDDKLSIS (91 aa).

The protein belongs to the ClpA/ClpB family. As to quaternary structure, homohexamer. The oligomerization is ATP-dependent.

It localises to the cytoplasm. In terms of biological role, part of a stress-induced multi-chaperone system, it is involved in the recovery of the cell from heat-induced damage, in cooperation with DnaK, DnaJ and GrpE. Acts before DnaK, in the processing of protein aggregates. Protein binding stimulates the ATPase activity; ATP hydrolysis unfolds the denatured protein aggregates, which probably helps expose new hydrophobic binding sites on the surface of ClpB-bound aggregates, contributing to the solubilization and refolding of denatured protein aggregates by DnaK. This chain is Chaperone protein ClpB 1 (clpB1), found in Parasynechococcus marenigrum (strain WH8102).